The sequence spans 123 residues: Large ribosomal subunit protein uL14 (123 aa).

This sequence belongs to the universal ribosomal protein uL14 family. As to quaternary structure, part of the 50S ribosomal subunit. Forms a cluster with proteins L3 and L19. In the 70S ribosome, L14 and L19 interact and together make contacts with the 16S rRNA in bridges B5 and B8.

Its function is as follows. Binds to 23S rRNA. Forms part of two intersubunit bridges in the 70S ribosome. The chain is Large ribosomal subunit protein uL14 from Corynebacterium urealyticum (strain ATCC 43042 / DSM 7109).